Here is a 216-residue protein sequence, read N- to C-terminus: NADH-quinone oxidoreductase subunit C (216 aa).

Belongs to the complex I 30 kDa subunit family. As to quaternary structure, NDH-1 is composed of 14 different subunits. Subunits NuoB, C, D, E, F, and G constitute the peripheral sector of the complex.

It localises to the cell inner membrane. It carries out the reaction a quinone + NADH + 5 H(+)(in) = a quinol + NAD(+) + 4 H(+)(out). Its function is as follows. NDH-1 shuttles electrons from NADH, via FMN and iron-sulfur (Fe-S) centers, to quinones in the respiratory chain. The immediate electron acceptor for the enzyme in this species is believed to be ubiquinone. Couples the redox reaction to proton translocation (for every two electrons transferred, four hydrogen ions are translocated across the cytoplasmic membrane), and thus conserves the redox energy in a proton gradient. The chain is NADH-quinone oxidoreductase subunit C from Francisella tularensis subsp. tularensis (strain FSC 198).